Reading from the N-terminus, the 315-residue chain is Acetyl-coenzyme A carboxylase carboxyl transferase subunit beta, chloroplastic (315 aa).

The region spanning 47 to 315 is the CoA carboxyltransferase N-terminal domain; that stretch reads LWTRCDSCEN…VYKESNSYLF (269 aa). 4 residues coordinate Zn(2+): C51, C54, C70, and C73. The C4-type zinc-finger motif lies at 51–73; that stretch reads CDSCENMLYVRFLKQNKRICEEC.

The protein belongs to the AccD/PCCB family. In terms of assembly, acetyl-CoA carboxylase is a heterohexamer composed of biotin carboxyl carrier protein, biotin carboxylase and 2 subunits each of ACCase subunit alpha and ACCase plastid-coded subunit beta (accD). Zn(2+) is required as a cofactor.

Its subcellular location is the plastid. The protein resides in the chloroplast stroma. It carries out the reaction N(6)-carboxybiotinyl-L-lysyl-[protein] + acetyl-CoA = N(6)-biotinyl-L-lysyl-[protein] + malonyl-CoA. The protein operates within lipid metabolism; malonyl-CoA biosynthesis; malonyl-CoA from acetyl-CoA: step 1/1. Functionally, component of the acetyl coenzyme A carboxylase (ACC) complex. Biotin carboxylase (BC) catalyzes the carboxylation of biotin on its carrier protein (BCCP) and then the CO(2) group is transferred by the transcarboxylase to acetyl-CoA to form malonyl-CoA. This is Acetyl-coenzyme A carboxylase carboxyl transferase subunit beta, chloroplastic from Physcomitrium patens (Spreading-leaved earth moss).